A 91-amino-acid chain; its full sequence is Protein transport protein Sec61 subunit beta (91 aa).

The segment at 1 to 45 (MSTSAQVPGGPAAQMKRRNNAQRQEAKASQRPTSTRSVGAGGSSS) is disordered. Topologically, residues 1 to 62 (MSTSAQVPGG…DESQGLKVDP (62 aa)) are cytoplasmic. The span at 30 to 45 (QRPTSTRSVGAGGSSS) shows a compositional bias: polar residues. A helical transmembrane segment spans residues 63 to 83 (VVVMVLSLGFIFSVVALHILA).

The protein belongs to the SEC61-beta family. Heterotrimeric complex composed of SEC61, SEB1 and SSS1.

Its subcellular location is the endoplasmic reticulum membrane. Necessary for protein translocation in the endoplasmic reticulum. This is Protein transport protein Sec61 subunit beta (SBH1) from Yarrowia lipolytica (strain CLIB 122 / E 150) (Yeast).